Reading from the N-terminus, the 592-residue chain is Proline--tRNA ligase (592 aa).

The protein belongs to the class-II aminoacyl-tRNA synthetase family. ProS type 1 subfamily. As to quaternary structure, homodimer.

It localises to the cytoplasm. It carries out the reaction tRNA(Pro) + L-proline + ATP = L-prolyl-tRNA(Pro) + AMP + diphosphate. Functionally, catalyzes the attachment of proline to tRNA(Pro) in a two-step reaction: proline is first activated by ATP to form Pro-AMP and then transferred to the acceptor end of tRNA(Pro). As ProRS can inadvertently accommodate and process non-cognate amino acids such as alanine and cysteine, to avoid such errors it has two additional distinct editing activities against alanine. One activity is designated as 'pretransfer' editing and involves the tRNA(Pro)-independent hydrolysis of activated Ala-AMP. The other activity is designated 'posttransfer' editing and involves deacylation of mischarged Ala-tRNA(Pro). The misacylated Cys-tRNA(Pro) is not edited by ProRS. This Corynebacterium urealyticum (strain ATCC 43042 / DSM 7109) protein is Proline--tRNA ligase.